We begin with the raw amino-acid sequence, 180 residues long: Major urinary protein 2 (180 aa).

The signal sequence occupies residues 1–18 (MKMLLLLCLGLTLVCVHA). Cysteines 82 and 175 form a disulfide.

The protein belongs to the calycin superfamily. Lipocalin family. Abundant in the urine of adult male mice but absent from that of females.

It localises to the secreted. Binds pheromones that are released from drying urine of males. These pheromones affect the sexual behavior of females. This is Major urinary protein 2 (Mup2) from Mus musculus (Mouse).